The sequence spans 416 residues: Hepatic and glial cell adhesion molecule (416 aa).

An N-terminal signal peptide occupies residues Met1 to Gly33. The Ig-like V-type domain maps to Val34–Asp142. Over Val34 to Ser240 the chain is Extracellular. N-linked (GlcNAc...) asparagine glycans are attached at residues Asn35, Asn138, Asn167, and Asn189. Positions Pro148–Thr234 constitute an Ig-like C2-type domain. An intrachain disulfide couples Cys168 to Cys217. A helical transmembrane segment spans residues Leu241 to Ala261. Over Cys262–Ala416 the chain is Cytoplasmic. Positions Leu273–Ala416 are disordered. Ser278 is subject to Phosphoserine. Residues Asn285 to Asn306 show a composition bias toward basic and acidic residues. Phosphoserine is present on residues Ser350 and Ser377. Residues Ser383 to Ala398 are compositionally biased toward low complexity.

Homodimer. Dimer formation occurs predominantly through cis interactions on the cell surface. Part of a complex containing MLC1, TRPV4, AQP4 and ATP1B1. Interacts with CLCN2. Post-translationally, N-glycosylated.

It localises to the cytoplasm. The protein localises to the cell membrane. Its function is as follows. Involved in regulating cell motility and cell-matrix interactions. May inhibit cell growth through suppression of cell proliferation. In glia, associates and targets CLCN2 at astrocytic processes and myelinated fiber tracts where it may regulate transcellular chloride flux involved in neuron excitability. The sequence is that of Hepatic and glial cell adhesion molecule from Homo sapiens (Human).